The primary structure comprises 295 residues: Glucose-1-phosphate thymidylyltransferase (295 aa).

Aspartate 111 and aspartate 226 together coordinate Mg(2+).

It belongs to the glucose-1-phosphate thymidylyltransferase family. Homotetramer. Mg(2+) is required as a cofactor.

It carries out the reaction dTTP + alpha-D-glucose 1-phosphate + H(+) = dTDP-alpha-D-glucose + diphosphate. Its pathway is carbohydrate biosynthesis; dTDP-L-rhamnose biosynthesis. It participates in bacterial outer membrane biogenesis; LPS O-antigen biosynthesis. Functionally, catalyzes the formation of dTDP-glucose, from dTTP and glucose 1-phosphate, as well as its pyrophosphorolysis. The polypeptide is Glucose-1-phosphate thymidylyltransferase (rmlA) (Xanthomonas campestris pv. campestris (strain B100)).